Reading from the N-terminus, the 695-residue chain is Centrosomal protein of 89 kDa (695 aa).

Disordered regions lie at residues 24-54, 66-147, and 167-272; these read LIPA…RPRS, TGRT…GDED, and AVPL…SEVL. Positions 34–49 are enriched in pro residues; that stretch reads PAVPRTPPPRSPNPSP. 2 stretches are compositionally biased toward acidic residues: residues 124–146 and 178–189; these read DEDD…EGDE and DSDVDEETEDSA. Over residues 209-226 the composition is skewed to polar residues; that stretch reads GQTQPSSLPQPRSVSRRS. The span at 251–271 shows a compositional bias: basic and acidic residues; that stretch reads TNKESPVRVNERDRSSEDSEV. 2 coiled-coil regions span residues 276 to 368 and 406 to 632; these read LEVQ…RYQA and AYED…LEKE.

It localises to the cytoplasm. It is found in the cytosol. Its subcellular location is the cytoskeleton. The protein localises to the microtubule organizing center. The protein resides in the centrosome. It localises to the spindle pole. It is found in the centriole. Its subcellular location is the mitochondrion intermembrane space. Functionally, required for ciliogenesis. Also plays a role in mitochondrial metabolism where it may modulate complex IV activity. This Danio rerio (Zebrafish) protein is Centrosomal protein of 89 kDa (cep89).